Here is a 349-residue protein sequence, read N- to C-terminus: tRNA pseudouridine synthase D (349 aa).

Residue F27 coordinates substrate. D80 serves as the catalytic Nucleophile. N129 provides a ligand contact to substrate. Residues 155–303 enclose the TRUD domain; that stretch reads GVPNYFGAQR…VEAARRAMLL (149 aa). F329 is a binding site for substrate.

It belongs to the pseudouridine synthase TruD family.

The catalysed reaction is uridine(13) in tRNA = pseudouridine(13) in tRNA. Responsible for synthesis of pseudouridine from uracil-13 in transfer RNAs. The sequence is that of tRNA pseudouridine synthase D from Enterobacter sp. (strain 638).